Here is a 51-residue protein sequence, read N- to C-terminus: Insulin (51 aa).

Intrachain disulfides connect C7-C37, C19-C50, and C36-C41.

Belongs to the insulin family. Heterodimer of a B chain and an A chain linked by two disulfide bonds.

The protein localises to the secreted. In terms of biological role, insulin decreases blood glucose concentration. It increases cell permeability to monosaccharides, amino acids and fatty acids. It accelerates glycolysis, the pentose phosphate cycle, and glycogen synthesis in liver. The sequence is that of Insulin (ins) from Anguilla rostrata (American eel).